We begin with the raw amino-acid sequence, 369 residues long: Variable large protein 7 (369 aa).

Positions 1–26 (MRKRISAIINKLNISIIIMTVVLMIG) are cleaved as a signal peptide. Cysteine 27 carries N-palmitoyl cysteine lipidation. Cysteine 27 is lipidated: S-diacylglycerol cysteine.

Belongs to the variable large protein (Vlp) family. Alpha subfamily.

The protein localises to the cell outer membrane. In terms of biological role, the Vlp and Vsp proteins are antigenically distinct proteins, only one vlp or vsp gene is transcriptionally active at any one time. Switching between these genes is a mechanism of host immune response evasion. The polypeptide is Variable large protein 7 (Borrelia hermsii).